A 1016-amino-acid chain; its full sequence is Vacuolar membrane protease (1016 aa).

The tract at residues 1–36 is disordered; the sequence is MAETESGTGNSPSHRLSETSNASGNRSHQQSKQIAS. At 1–57 the chain is on the cytoplasmic side; that stretch reads MAETESGTGNSPSHRLSETSNASGNRSHQQSKQIASYKSSKPNVFIRFIRAIFGYRK. Residues 58–78 traverse the membrane as a helical segment; sequence TSVTLFVFITIIATLILVELS. Over 79–408 the chain is Vacuolar; sequence NSLDFSVKLP…FVIPASQLVL (330 aa). 2 N-linked (GlcNAc...) asparagine glycosylation sites follow: Asn147 and Asn177. Residues His191 and Asp203 each coordinate Zn(2+). Glu238 functions as the Proton acceptor in the catalytic mechanism. Glu239, Glu264, and His337 together coordinate Zn(2+). Residues 409–429 form a helical membrane-spanning segment; the sequence is INVTCLAVIPLISLPLLVIIF. Residues 430–438 lie on the Cytoplasmic side of the membrane; the sequence is NYKKNWHIG. Residues 439–459 traverse the membrane as a helical segment; that stretch reads FINAIKFPVSLVLSICILNII. At 460–481 the chain is on the vacuolar side; that stretch reads THNVIASINEFLPNSSYDSIVS. A glycan (N-linked (GlcNAc...) asparagine) is linked at Asn473. The helical transmembrane segment at 482-502 threads the bilayer; the sequence is TLYSLFLLLNYLFLNGINFIF. Residues 503–511 lie on the Cytoplasmic side of the membrane; that stretch reads KGYKGLYHD. The helical transmembrane segment at 512–532 threads the bilayer; that stretch reads EKLILIIQTSFIYWVLLIVST. Over 533-547 the chain is Vacuolar; sequence NKLSKNKIGNDHTGE. A helical transmembrane segment spans residues 548-568; that stretch reads FPLIMLFLLQSIGALFGLFSW. Residues 569-646 are Cytoplasmic-facing; that stretch reads SFKKTTPDEL…SFSYDWSIQY (78 aa). The tract at residues 598–622 is disordered; that stretch reads YGSNEAELESGEPISSNSSVSLNSS. The span at 612-622 shows a compositional bias: low complexity; that stretch reads SSNSSVSLNSS. The chain crosses the membrane as a helical span at residues 647–667; the sequence is VVIVPLSSLIVYNTGSLLLSG. Residues 668 to 681 are Vacuolar-facing; it reads LNKSIQESLNAEKL. Residue Asn669 is glycosylated (N-linked (GlcNAc...) asparagine). The helical transmembrane segment at 682 to 702 threads the bilayer; the sequence is IFDLIQLVAVTLAIPFLPFIF. Over 703-706 the chain is Cytoplasmic; the sequence is KINR. The helical transmembrane segment at 707–727 threads the bilayer; it reads LLVTALVLVFCSGFISIFLKS. At 728–1016 the chain is on the vacuolar side; the sequence is PFDQLNPLKL…LVSVSKYVEI (289 aa). N-linked (GlcNAc...) asparagine glycans are attached at residues Asn778, Asn821, Asn850, Asn875, and Asn977.

Belongs to the peptidase M28 family. Zn(2+) is required as a cofactor.

Its subcellular location is the vacuole membrane. Functionally, may be involved in vacuolar sorting and osmoregulation. The sequence is that of Vacuolar membrane protease from Debaryomyces hansenii (strain ATCC 36239 / CBS 767 / BCRC 21394 / JCM 1990 / NBRC 0083 / IGC 2968) (Yeast).